The following is a 279-amino-acid chain: Bifunctional protein FolD (279 aa).

NADP(+) is bound by residues 164 to 166 (GRS), Ser189, and Ile230.

This sequence belongs to the tetrahydrofolate dehydrogenase/cyclohydrolase family. As to quaternary structure, homodimer.

The catalysed reaction is (6R)-5,10-methylene-5,6,7,8-tetrahydrofolate + NADP(+) = (6R)-5,10-methenyltetrahydrofolate + NADPH. It catalyses the reaction (6R)-5,10-methenyltetrahydrofolate + H2O = (6R)-10-formyltetrahydrofolate + H(+). It participates in one-carbon metabolism; tetrahydrofolate interconversion. Functionally, catalyzes the oxidation of 5,10-methylenetetrahydrofolate to 5,10-methenyltetrahydrofolate and then the hydrolysis of 5,10-methenyltetrahydrofolate to 10-formyltetrahydrofolate. In Agathobacter rectalis (strain ATCC 33656 / DSM 3377 / JCM 17463 / KCTC 5835 / VPI 0990) (Eubacterium rectale), this protein is Bifunctional protein FolD.